A 1002-amino-acid polypeptide reads, in one-letter code: ATP-dependent DNA helicase MPH1 (1002 aa).

Residues 108–275 (IVRCALFENV…EVVNNLHISK (168 aa)) form the Helicase ATP-binding domain. 121–128 (IPTGTGKT) lines the ATP pocket. The DEAH box motif lies at 223–226 (DEAH). Residues 506 to 669 (DEETYIRKNK…ALEYTKSDRI (164 aa)) enclose the Helicase C-terminal domain. Basic and acidic residues predominate over residues 531 to 551 (ENRVEEEKKRQKEQAKLERTG). Disordered stretches follow at residues 531-569 (ENRVEEEKKRQKEQAKLERTGRRTGSSEEAQLSGMNQKQ) and 799-843 (AKSQ…DSHT). Residues 553–568 (RTGSSEEAQLSGMNQK) are compositionally biased toward polar residues.

This sequence belongs to the DEAD box helicase family. DEAH subfamily. FANCM sub-subfamily. Interacts with the MHF histone-fold complex to form the FANCM-MHF complex.

It is found in the nucleus. The catalysed reaction is ATP + H2O = ADP + phosphate + H(+). In terms of biological role, ATP-dependent DNA helicase involved in DNA damage repair by homologous recombination and in genome maintenance. Capable of unwinding D-loops. Plays a role in limiting crossover recombinants during mitotic DNA double-strand break (DSB) repair. Component of a FANCM-MHF complex which promotes gene conversion at blocked replication forks, probably by reversal of the stalled fork. This chain is ATP-dependent DNA helicase MPH1, found in Kluyveromyces lactis (strain ATCC 8585 / CBS 2359 / DSM 70799 / NBRC 1267 / NRRL Y-1140 / WM37) (Yeast).